Consider the following 363-residue polypeptide: Large ribosomal subunit protein uL4A (363 aa).

Serine 87 carries the phosphoserine modification. Residues 280-363 form a C-terminal-extended nuclear localization signal region; the sequence is PENIISNADV…EKFLTVLHEN (84 aa).

Belongs to the universal ribosomal protein uL4 family. In terms of assembly, component of the large ribosomal subunit (LSU). Mature yeast ribosomes consist of a small (40S) and a large (60S) subunit. The 40S small subunit contains 1 molecule of ribosomal RNA (18S rRNA) and at least 33 different proteins. The large 60S subunit contains 3 rRNA molecules (25S, 5.8S and 5S rRNA) and at least 46 different proteins. uL4 is associated with the polypeptide exit tunnel. uL4 interacts with its chaperone ACL4 and the nuclear import receptor KAP104.

The protein localises to the cytoplasm. It is found in the nucleus. In terms of biological role, component of the ribosome, a large ribonucleoprotein complex responsible for the synthesis of proteins in the cell. The small ribosomal subunit (SSU) binds messenger RNAs (mRNAs) and translates the encoded message by selecting cognate aminoacyl-transfer RNA (tRNA) molecules. The large subunit (LSU) contains the ribosomal catalytic site termed the peptidyl transferase center (PTC), which catalyzes the formation of peptide bonds, thereby polymerizing the amino acids delivered by tRNAs into a polypeptide chain. The nascent polypeptides leave the ribosome through a tunnel in the LSU and interact with protein factors that function in enzymatic processing, targeting, and the membrane insertion of nascent chains at the exit of the ribosomal tunnel. uL4 participates in the regulation of the accumulation of its own mRNA. The protein is Large ribosomal subunit protein uL4A (rpl402) of Schizosaccharomyces pombe (strain 972 / ATCC 24843) (Fission yeast).